Reading from the N-terminus, the 299-residue chain is F-actin-capping protein subunit alpha-3 (299 aa).

S290 carries the post-translational modification Phosphoserine.

The protein belongs to the F-actin-capping protein alpha subunit family. In terms of assembly, component of the F-actin capping complex, composed of a heterodimer of an alpha and a beta subunit. Component of the WASH complex, composed of F-actin-capping protein subunit alpha (CAPZA1, CAPZA2 or CAPZA3), F-actin-capping protein subunit beta (CAPZB), WASHC1, WASHC2, WASHC3, WASHC4 and WASHC5.

In terms of biological role, F-actin-capping proteins bind in a Ca(2+)-independent manner to the fast growing ends of actin filaments (barbed end) thereby blocking the exchange of subunits at these ends. Unlike other capping proteins (such as gelsolin and severin), these proteins do not sever actin filaments. May play a role in the morphogenesis of spermatid. The chain is F-actin-capping protein subunit alpha-3 (CAPZA3) from Macaca fascicularis (Crab-eating macaque).